Here is a 339-residue protein sequence, read N- to C-terminus: Ubiquitin carboxyl-terminal hydrolase 50 (339 aa).

Residues threonine 44–alanine 339 enclose the USP domain. Cysteine 53 acts as the Nucleophile in catalysis. The active-site Proton acceptor is histidine 327.

It belongs to the peptidase C19 family. As to expression, weakly expressed in a few tissues.

Its subcellular location is the cytoplasm. It is found in the cytoskeleton. It localises to the microtubule organizing center. The protein localises to the centrosome. The protein resides in the nucleus. The catalysed reaction is Thiol-dependent hydrolysis of ester, thioester, amide, peptide and isopeptide bonds formed by the C-terminal Gly of ubiquitin (a 76-residue protein attached to proteins as an intracellular targeting signal).. Functionally, deubiquitinating enzyme that removes conjugated ubiquitin from specific proteins to regulate different cellular processes. Regulates the inflammasome signaling pathway by deubiquitinating 'Lys-63'-linked polyubiquitination of the PYCARD/ASC adapter protein. Regulates the ubiquitination and stability of the ACE2 protein. Acts as a negative regulator of the G2/M checkpoint pathway, by preventing serine/threonine kinase WEE1 degradation, thereby repressing entry into mitosis following activation of the G2/M DNA damage checkpoint. The sequence is that of Ubiquitin carboxyl-terminal hydrolase 50 from Homo sapiens (Human).